The primary structure comprises 125 residues: Small ribosomal subunit protein uS13 (125 aa).

The tract at residues 95–125 (GLPLRGQRTKTNARTRKGKRKTVANKKIASK) is disordered.

It belongs to the universal ribosomal protein uS13 family. Part of the 30S ribosomal subunit. Forms a loose heterodimer with protein S19. Forms two bridges to the 50S subunit in the 70S ribosome.

Functionally, located at the top of the head of the 30S subunit, it contacts several helices of the 16S rRNA. In the 70S ribosome it contacts the 23S rRNA (bridge B1a) and protein L5 of the 50S subunit (bridge B1b), connecting the 2 subunits; these bridges are implicated in subunit movement. Contacts the tRNAs in the A and P-sites. In Borrelia garinii subsp. bavariensis (strain ATCC BAA-2496 / DSM 23469 / PBi) (Borreliella bavariensis), this protein is Small ribosomal subunit protein uS13.